The primary structure comprises 300 residues: ESX-5 secretion-associated protein EspG5 (300 aa).

Belongs to the EspG family. Interacts specifically with ESX-5-dependent PE/PPE proteins. Forms a 1:1:1 heterotrimeric complex with the PE25/PPE41 dimer, via PPE41. Binding of EspG5 does not cause conformational changes in the PE25/PPE41 dimer. Forms a 1:1:1 heterotrimeric complex with the PE8/PPE15 dimer, via PPE15.

It is found in the cytoplasm. Its function is as follows. Specific chaperone for cognate PE/PPE proteins. Plays an important role in preventing aggregation of PE/PPE dimers. The protein is ESX-5 secretion-associated protein EspG5 of Mycobacterium tuberculosis (strain ATCC 25618 / H37Rv).